A 60-amino-acid chain; its full sequence is Large ribosomal subunit protein bL32 (60 aa).

The protein belongs to the bacterial ribosomal protein bL32 family.

The sequence is that of Large ribosomal subunit protein bL32 from Paramagnetospirillum magneticum (strain ATCC 700264 / AMB-1) (Magnetospirillum magneticum).